The chain runs to 292 residues: uncharacterized protein (292 aa).

Residues 1-59 (MTITQLKVFVKIAETGSFTKAGQALNMTQPAVSHAISAIEAELDVKLIIRDRRNGLMLT) form the HTH lysR-type domain. Positions 18–37 (FTKAGQALNMTQPAVSHAIS) form a DNA-binding region, H-T-H motif.

The protein belongs to the LysR transcriptional regulatory family.

This is an uncharacterized protein from Bacillus subtilis (strain 168).